We begin with the raw amino-acid sequence, 90 residues long: Putative regulatory protein cce_4590 (90 aa).

The protein belongs to the RemA family.

This chain is Putative regulatory protein cce_4590, found in Crocosphaera subtropica (strain ATCC 51142 / BH68) (Cyanothece sp. (strain ATCC 51142)).